A 1232-amino-acid chain; its full sequence is Anoctamin-8 (1232 aa).

The interval 1–32 is disordered; sequence MAEAASGAGGTSLEGERGKRPPPEGEPAAPAS. Residue A2 is modified to N-acetylalanine. Topologically, residues 2-244 are extracellular; that stretch reads AEAASGAGGT…DDICDYFGVK (243 aa). The span at 14–23 shows a compositional bias: basic and acidic residues; it reads EGERGKRPPP. Residues 245–265 traverse the membrane as a helical segment; sequence IAMYFAWLGFYTSAMVYPAVF. The Cytoplasmic portion of the chain corresponds to 266–281; sequence GSVLYTFTEADQTSRD. A helical transmembrane segment spans residues 282-302; the sequence is VSCVVFALFNVIWSTLFLEEW. Residues 303-356 lie on the Extracellular side of the membrane; it reads KRRGAELAYKWGTLDSPGEAVEEPRPQFRGVRRISPITRAEEFYYPPWKRLLFQ. S318 carries the phosphoserine modification. A helical membrane pass occupies residues 357 to 377; that stretch reads LLVSLPLCLACLVCVFLLMLG. The Cytoplasmic segment spans residues 378–400; that stretch reads CFQLQELVLSVKGLPRLARFLPK. The chain crosses the membrane as a helical span at residues 401-421; that stretch reads VMLALLVSVSAEGYKKLAIWL. Topologically, residues 422–437 are extracellular; that stretch reads NDMENYRLESAYEKHL. The helical transmembrane segment at 438 to 458 threads the bilayer; sequence IIKVVLFQFVNSYLSLFYIGF. Residues 459-750 lie on the Cytoplasmic side of the membrane; that stretch reads YLKDMERLKE…YEDTFQDYQE (292 aa). Positions 524–650 are disordered; that stretch reads RRLEPQADEG…SPTMVEKGLE (127 aa). The segment covering 532–551 has biased composition (gly residues); that stretch reads EGGGGGSGGGGRRCLSGGCG. Over residues 582 to 606 the composition is skewed to acidic residues; that stretch reads EEDEDDEEEEDEEEEEDEEEGEEGG. S669 carries the phosphoserine modification. The disordered stretch occupies residues 681 to 728; the sequence is RAGGEGRDQGPDGGPDPEPGSNSDSTRRQRRQNRSSWIDPPEEEHSPQ. The chain crosses the membrane as a helical span at residues 751–771; sequence MFVQFGYVVLFSSAFPLAALC. Topologically, residues 772-807 are extracellular; the sequence is ALVNNLIEIRSDAFKLCTGLQRPFGQRVESIGQWQK. S801 bears the Phosphoserine; by FAM20C mark. Residues 808–828 traverse the membrane as a helical segment; the sequence is VMEAMGVLAIVVNCYLIGQCG. The Cytoplasmic portion of the chain corresponds to 829–841; it reads QLQRLFPWLSPEA. The helical transmembrane segment at 842–862 threads the bilayer; it reads AIVSVVVLEHFALLLKYLIHV. At 863 to 1232 the chain is on the extracellular side; the sequence is AIPDIPGWVA…QAVCWPSGWH (370 aa). Disordered regions lie at residues 888–970, 997–1152, and 1174–1232; these read RHER…GSLL, LAAA…WQWD, and PPCA…SGWH. Over residues 904–932 the composition is skewed to basic and acidic residues; it reads RREEEERQRHAEHHARREHDSGGREEARA. Low complexity-rich tracts occupy residues 933 to 953 and 997 to 1006; these read EGSGLDPATSSEKASAKAKGS and LAAAGAGATT. Asymmetric dimethylarginine; alternate is present on R1020. R1020 carries the post-translational modification Omega-N-methylarginine; alternate. The span at 1031–1043 shows a compositional bias: basic and acidic residues; that stretch reads KSPETRRDSERSH. The segment covering 1078–1087 has biased composition (polar residues); sequence TPSSGSSRVQ. Composition is skewed to pro residues over residues 1130–1145 and 1197–1221; these read PAPPPPMPLPRPPTPP and LPPPPLPPTSDPLETPAPSPSPSPS.

The protein belongs to the anoctamin family. Expressed in embryonic stem cells, fetal brain and neural tissues.

It is found in the cell membrane. Its function is as follows. Does not exhibit calcium-activated chloride channel (CaCC) activity. The protein is Anoctamin-8 (ANO8) of Homo sapiens (Human).